The chain runs to 162 residues: Interleukin-15 (162 aa).

An N-terminal signal peptide occupies residues 1–29 (MRILKPYLRSTSIQCYLCLLLNSHFLTEA). Positions 30–48 (GIHVFILGCISASLPKTEA) are excised as a propeptide. 2 disulfides stabilise this stretch: Cys83–Cys133 and Cys90–Cys136. N-linked (GlcNAc...) asparagine glycans are attached at residues Asn104, Asn113, Asn121, and Asn127.

Belongs to the IL-15/IL-21 family.

The protein localises to the secreted. Its function is as follows. Cytokine that plays a major role in the development of inflammatory and protective immune responses to microbial invaders and parasites by modulating immune cells of both the innate and adaptive immune systems. Stimulates the proliferation of natural killer cells, T-cells and B-cells and promotes the secretion of several cytokines. In monocytes, induces the production of IL8 and monocyte chemotactic protein 1/CCL2, two chemokines that attract neutrophils and monocytes respectively to sites of infection. Unlike most cytokines, which are secreted in soluble form, IL15 is expressed in association with its high affinity IL15RA on the surface of IL15-producing cells and delivers signals to target cells that express IL2RB and IL2RG receptor subunits. Binding to its receptor triggers the phosphorylation of JAK1 and JAK3 and the recruitment and subsequent phosphorylation of signal transducer and activator of transcription-3/STAT3 and STAT5. In mast cells, induces the rapid tyrosine phosphorylation of STAT6 and thereby controls mast cell survival and release of cytokines such as IL4. The polypeptide is Interleukin-15 (IL15) (Bos taurus (Bovine)).